The chain runs to 152 residues: Large ribosomal subunit protein uL15 (152 aa).

The interval 1–57 (MTSTLNTLKSNSGSRKKKLRKGRGIAAGQGASCGFGMRGQKSRSGRPTRPGFEGGQM) is disordered. A compositionally biased stretch (basic residues) spans 14–23 (SRKKKLRKGR). The span at 25–37 (IAAGQGASCGFGM) shows a compositional bias: gly residues.

It belongs to the universal ribosomal protein uL15 family. In terms of assembly, part of the 50S ribosomal subunit.

In terms of biological role, binds to the 23S rRNA. The chain is Large ribosomal subunit protein uL15 from Prochlorococcus marinus (strain MIT 9301).